We begin with the raw amino-acid sequence, 72 residues long: UPF0270 protein PM1156 (72 aa).

The protein belongs to the UPF0270 family.

In Pasteurella multocida (strain Pm70), this protein is UPF0270 protein PM1156.